Here is a 144-residue protein sequence, read N- to C-terminus: Transcription antitermination protein NusB (144 aa).

This sequence belongs to the NusB family.

Involved in transcription antitermination. Required for transcription of ribosomal RNA (rRNA) genes. Binds specifically to the boxA antiterminator sequence of the ribosomal RNA (rrn) operons. This is Transcription antitermination protein NusB from Haemophilus influenzae (strain PittGG).